Here is a 361-residue protein sequence, read N- to C-terminus: tRNA/tmRNA (uracil-C(5))-methyltransferase (361 aa).

Positions 185, 213, 218, 234, and 294 each coordinate S-adenosyl-L-methionine. Cys319 serves as the catalytic Nucleophile. The Proton acceptor role is filled by Glu353.

This sequence belongs to the class I-like SAM-binding methyltransferase superfamily. RNA M5U methyltransferase family. TrmA subfamily.

It catalyses the reaction uridine(54) in tRNA + S-adenosyl-L-methionine = 5-methyluridine(54) in tRNA + S-adenosyl-L-homocysteine + H(+). The enzyme catalyses uridine(341) in tmRNA + S-adenosyl-L-methionine = 5-methyluridine(341) in tmRNA + S-adenosyl-L-homocysteine + H(+). Dual-specificity methyltransferase that catalyzes the formation of 5-methyluridine at position 54 (m5U54) in all tRNAs, and that of position 341 (m5U341) in tmRNA (transfer-mRNA). The chain is tRNA/tmRNA (uracil-C(5))-methyltransferase from Pseudomonas savastanoi pv. phaseolicola (strain 1448A / Race 6) (Pseudomonas syringae pv. phaseolicola (strain 1448A / Race 6)).